The primary structure comprises 560 residues: Mannosyl-oligosaccharide 1,2-alpha-mannosidase MNS1 (560 aa).

Residues 1–27 are Cytoplasmic-facing; sequence MARSRSISGYGIWKYLNPAYYLRRPRR. A helical; Signal-anchor for type II membrane protein membrane pass occupies residues 28 to 47; it reads LALLFIVFVSVSMLVWDRIN. The stretch at 47-80 forms a coiled coil; the sequence is NLAREHEVEVFKLNEEVSRLEQMLEELNGGVGNK. The Lumenal segment spans residues 48-560; the sequence is LAREHEVEVF…QRKFGHQINV (513 aa). Glutamate 179 serves as the catalytic Proton donor. Aspartate 312 is an active-site residue. An N-linked (GlcNAc...) asparagine glycan is attached at asparagine 326. A disulfide bond links cysteine 377 and cysteine 409. The active-site Proton donor is the glutamate 423. Glutamate 445 is a catalytic residue. Asparagine 459 carries N-linked (GlcNAc...) asparagine glycosylation. Threonine 529 lines the Ca(2+) pocket.

The protein belongs to the glycosyl hydrolase 47 family. Ca(2+) is required as a cofactor. The cofactor is Mn(2+). Mg(2+) serves as cofactor. Expressed in flowers, siliques, stems, leaves, roots, pollen grains, shoot apical meristems, hypocotyls and upper region of the root.

It localises to the golgi apparatus membrane. The catalysed reaction is N(4)-(alpha-D-Man-(1-&gt;2)-alpha-D-Man-(1-&gt;2)-alpha-D-Man-(1-&gt;3)-[alpha-D-Man-(1-&gt;2)-alpha-D-Man-(1-&gt;3)-[alpha-D-Man-(1-&gt;2)-alpha-D-Man-(1-&gt;6)]-alpha-D-Man-(1-&gt;6)]-beta-D-Man-(1-&gt;4)-beta-D-GlcNAc-(1-&gt;4)-beta-D-GlcNAc)-L-asparaginyl-[protein] (N-glucan mannose isomer 9A1,2,3B1,2,3) + 4 H2O = N(4)-(alpha-D-Man-(1-&gt;3)-[alpha-D-Man-(1-&gt;3)-[alpha-D-Man-(1-&gt;6)]-alpha-D-Man-(1-&gt;6)]-beta-D-Man-(1-&gt;4)-beta-D-GlcNAc-(1-&gt;4)-beta-D-GlcNAc)-L-asparaginyl-[protein] (N-glucan mannose isomer 5A1,2) + 4 beta-D-mannose. The enzyme catalyses N(4)-(alpha-D-Man-(1-&gt;2)-alpha-D-Man-(1-&gt;2)-alpha-D-Man-(1-&gt;3)-[alpha-D-Man-(1-&gt;3)-[alpha-D-Man-(1-&gt;2)-alpha-D-Man-(1-&gt;6)]-alpha-D-Man-(1-&gt;6)]-beta-D-Man-(1-&gt;4)-beta-D-GlcNAc-(1-&gt;4)-beta-D-GlcNAc)-L-asparaginyl-[protein] (N-glucan mannose isomer 8A1,2,3B1,3) + 3 H2O = N(4)-(alpha-D-Man-(1-&gt;3)-[alpha-D-Man-(1-&gt;3)-[alpha-D-Man-(1-&gt;6)]-alpha-D-Man-(1-&gt;6)]-beta-D-Man-(1-&gt;4)-beta-D-GlcNAc-(1-&gt;4)-beta-D-GlcNAc)-L-asparaginyl-[protein] (N-glucan mannose isomer 5A1,2) + 3 beta-D-mannose. It carries out the reaction N(4)-(alpha-D-Man-(1-&gt;2)-alpha-D-Man-(1-&gt;2)-alpha-D-Man-(1-&gt;3)-[alpha-D-Man-(1-&gt;2)-alpha-D-Man-(1-&gt;3)-[alpha-D-Man-(1-&gt;2)-alpha-D-Man-(1-&gt;6)]-alpha-D-Man-(1-&gt;6)]-beta-D-Man-(1-&gt;4)-beta-D-GlcNAc-(1-&gt;4)-beta-D-GlcNAc)-L-asparaginyl-[protein] (N-glucan mannose isomer 9A1,2,3B1,2,3) + H2O = N(4)-(alpha-D-Man-(1-&gt;2)-alpha-D-Man-(1-&gt;2)-alpha-D-Man-(1-&gt;3)-[alpha-D-Man-(1-&gt;3)-[alpha-D-Man-(1-&gt;2)-alpha-D-Man-(1-&gt;6)]-alpha-D-Man-(1-&gt;6)]-beta-D-Man-(1-&gt;4)-beta-D-GlcNAc-(1-&gt;4)-beta-D-GlcNAc)-L-asparaginyl-[protein] (N-glucan mannose isomer 8A1,2,3B1,3) + beta-D-mannose. Its pathway is protein modification; protein glycosylation. With respect to regulation, inhibited by kifunensine and 1-deoxymannojirimycin, but not by swainsonine. Its function is as follows. Class I alpha-mannosidase essential for early N-glycan processing. Progressively trims alpha-1,2-linked mannose residues. Produces Man(5)GlcNAc(2) from Man(8)GlcNAc(2), but only Man(6)GlcNAc(2) from Man(9)GlcNAc(2). Has difficulty acting on the terminal mannose of the b-branch. Involved in root development and cell wall biosynthesis. This Arabidopsis thaliana (Mouse-ear cress) protein is Mannosyl-oligosaccharide 1,2-alpha-mannosidase MNS1 (MNS1).